We begin with the raw amino-acid sequence, 74 residues long: ATP synthase subunit c (74 aa).

2 helical membrane passes run 9 to 29 (IAIA…ASIF) and 51 to 71 (LIGA…AILL).

It belongs to the ATPase C chain family. As to quaternary structure, F-type ATPases have 2 components, F(1) - the catalytic core - and F(0) - the membrane proton channel. F(1) has five subunits: alpha(3), beta(3), gamma(1), delta(1), epsilon(1). F(0) has three main subunits: a(1), b(2) and c(10-14). The alpha and beta chains form an alternating ring which encloses part of the gamma chain. F(1) is attached to F(0) by a central stalk formed by the gamma and epsilon chains, while a peripheral stalk is formed by the delta and b chains.

Its subcellular location is the cell inner membrane. Its function is as follows. F(1)F(0) ATP synthase produces ATP from ADP in the presence of a proton or sodium gradient. F-type ATPases consist of two structural domains, F(1) containing the extramembraneous catalytic core and F(0) containing the membrane proton channel, linked together by a central stalk and a peripheral stalk. During catalysis, ATP synthesis in the catalytic domain of F(1) is coupled via a rotary mechanism of the central stalk subunits to proton translocation. Functionally, key component of the F(0) channel; it plays a direct role in translocation across the membrane. A homomeric c-ring of between 10-14 subunits forms the central stalk rotor element with the F(1) delta and epsilon subunits. The sequence is that of ATP synthase subunit c from Orientia tsutsugamushi (strain Ikeda) (Rickettsia tsutsugamushi).